Reading from the N-terminus, the 441-residue chain is Ribosomal protein uS12 methylthiotransferase RimO (441 aa).

Residues 8 to 118 (PKIGFVSLGC…VLQHVHHYVP (111 aa)) form the MTTase N-terminal domain. [4Fe-4S] cluster is bound by residues C17, C53, C82, C150, C154, and C157. One can recognise a Radical SAM core domain in the interval 136 to 373 (LTPRHYAYLK…MQLQQQISAE (238 aa)). In terms of domain architecture, TRAM spans 376 to 441 (QEKVGREILV…DEYDLWGSRV (66 aa)).

It belongs to the methylthiotransferase family. RimO subfamily. It depends on [4Fe-4S] cluster as a cofactor.

It localises to the cytoplasm. The catalysed reaction is L-aspartate(89)-[ribosomal protein uS12]-hydrogen + (sulfur carrier)-SH + AH2 + 2 S-adenosyl-L-methionine = 3-methylsulfanyl-L-aspartate(89)-[ribosomal protein uS12]-hydrogen + (sulfur carrier)-H + 5'-deoxyadenosine + L-methionine + A + S-adenosyl-L-homocysteine + 2 H(+). Functionally, catalyzes the methylthiolation of an aspartic acid residue of ribosomal protein uS12. The chain is Ribosomal protein uS12 methylthiotransferase RimO from Salmonella heidelberg (strain SL476).